A 156-amino-acid chain; its full sequence is Small ribosomal subunit protein uS7 (156 aa).

Belongs to the universal ribosomal protein uS7 family. In terms of assembly, part of the 30S ribosomal subunit. Contacts proteins S9 and S11.

Its function is as follows. One of the primary rRNA binding proteins, it binds directly to 16S rRNA where it nucleates assembly of the head domain of the 30S subunit. Is located at the subunit interface close to the decoding center, probably blocks exit of the E-site tRNA. The polypeptide is Small ribosomal subunit protein uS7 (Salinispora tropica (strain ATCC BAA-916 / DSM 44818 / JCM 13857 / NBRC 105044 / CNB-440)).